Consider the following 234-residue polypeptide: 1-(5-phosphoribosyl)-5-[(5-phosphoribosylamino)methylideneamino] imidazole-4-carboxamide isomerase (234 aa).

The active-site Proton acceptor is the Asp9. Asp131 serves as the catalytic Proton donor.

It belongs to the HisA/HisF family.

Its subcellular location is the cytoplasm. The catalysed reaction is 1-(5-phospho-beta-D-ribosyl)-5-[(5-phospho-beta-D-ribosylamino)methylideneamino]imidazole-4-carboxamide = 5-[(5-phospho-1-deoxy-D-ribulos-1-ylimino)methylamino]-1-(5-phospho-beta-D-ribosyl)imidazole-4-carboxamide. The protein operates within amino-acid biosynthesis; L-histidine biosynthesis; L-histidine from 5-phospho-alpha-D-ribose 1-diphosphate: step 4/9. The sequence is that of 1-(5-phosphoribosyl)-5-[(5-phosphoribosylamino)methylideneamino] imidazole-4-carboxamide isomerase from Staphylococcus carnosus (strain TM300).